The sequence spans 218 residues: Ribose-5-phosphate isomerase A (218 aa).

Substrate-binding positions include 28–31, 81–84, and 94–97; these read TGST, DGAD, and KGGG. Catalysis depends on glutamate 103, which acts as the Proton acceptor. A substrate-binding site is contributed by lysine 121.

It belongs to the ribose 5-phosphate isomerase family. In terms of assembly, homodimer.

The enzyme catalyses aldehydo-D-ribose 5-phosphate = D-ribulose 5-phosphate. The protein operates within carbohydrate degradation; pentose phosphate pathway; D-ribose 5-phosphate from D-ribulose 5-phosphate (non-oxidative stage): step 1/1. Catalyzes the reversible conversion of ribose-5-phosphate to ribulose 5-phosphate. The polypeptide is Ribose-5-phosphate isomerase A (Psychromonas ingrahamii (strain DSM 17664 / CCUG 51855 / 37)).